Reading from the N-terminus, the 198-residue chain is MASQEIEALSGALARLPGLGPRSARRAVLWLIKRRETALPQLLNALTQVQELLVECGVCGNVDTSNPCGICTDHRRDQRSICVVEEVADLWALDRARLFTGKYHVLGGRLSALEGVRPEDLTIGSLLDRVAQGGIDEVVLAMNATLEGQTTAHYIAERLEGAAVRVTQLAHGLPVGGELDYLDEGTLAQALRARRPVG.

A C4-type zinc finger spans residues 56 to 71 (CGVCGNVDTSNPCGIC). The Toprim domain occupies 79 to 174 (RSICVVEEVA…RVTQLAHGLP (96 aa)).

Belongs to the RecR family.

Its function is as follows. May play a role in DNA repair. It seems to be involved in an RecBC-independent recombinational process of DNA repair. It may act with RecF and RecO. The chain is Recombination protein RecR from Novosphingobium aromaticivorans (strain ATCC 700278 / DSM 12444 / CCUG 56034 / CIP 105152 / NBRC 16084 / F199).